The primary structure comprises 62 residues: Conotoxin Pn-014 (62 aa).

A signal peptide spans 1–22 (MRCLPVFVILLLLIASAPSVDA). Positions 23–48 (RPKTKDDIPLVSFQDHAKRILQTFES) are excised as a propeptide. Tryptophan amide is present on tryptophan 61.

The protein belongs to the conotoxin T superfamily. Contains 2 disulfide bonds that can be either 'C1-C3, C2-C4' or 'C1-C4, C2-C3', since these disulfide connectivities have been observed for conotoxins with cysteine framework V (for examples, see AC P0DQQ7 and AC P81755). Expressed by the venom duct.

The protein resides in the secreted. This chain is Conotoxin Pn-014, found in Conus pennaceus (Feathered cone).